Consider the following 173-residue polypeptide: RNA pyrophosphohydrolase (173 aa).

One can recognise a Nudix hydrolase domain in the interval 6–149 (GYRPNVGIIL…KRHVYRRALR (144 aa)). The short motif at 38 to 59 (GGIRRDESPLDAMYRELAEETG) is the Nudix box element.

This sequence belongs to the Nudix hydrolase family. RppH subfamily. It depends on a divalent metal cation as a cofactor.

Functionally, accelerates the degradation of transcripts by removing pyrophosphate from the 5'-end of triphosphorylated RNA, leading to a more labile monophosphorylated state that can stimulate subsequent ribonuclease cleavage. This Thioalkalivibrio sulfidiphilus (strain HL-EbGR7) protein is RNA pyrophosphohydrolase.